The sequence spans 513 residues: Varicidin biosynthesis cluster-specific transcription factor (513 aa).

Residues 16-54 (CERCRLHKLKCTILPQKRFEGPQEAPEQCTRCARAKAKC) constitute a DNA-binding region (zn(2)-C6 fungal-type). 2 disordered regions span residues 58–92 (RRAPPKHRASSSNDRSSVSKGINSTTPATRTMQPN) and 97–116 (VSSHRIELPPSPASNQSSLK). Residues 67–76 (SSSNDRSSVS) are compositionally biased toward low complexity. Residues 77–92 (KGINSTTPATRTMQPN) are compositionally biased toward polar residues.

It is found in the nucleus. In terms of biological role, transcription factor that regulates the expression of the gene cluster that mediates the biosynthesis of varicidin A, an antifungal natural product containing a cis-octahydrodecalin core. This is Varicidin biosynthesis cluster-specific transcription factor from Talaromyces variabilis (Penicillium variabile).